A 483-amino-acid polypeptide reads, in one-letter code: Nuc-1 negative regulatory protein preg (483 aa).

3 stretches are compositionally biased toward low complexity: residues 1–32 (MLTR…PRPS), 60–80 (SSRR…PISI), and 176–200 (ASAL…AVAV). 3 disordered regions span residues 1 to 112 (MLTR…SRPQ), 164 to 234 (NTVG…SQGD), and 434 to 483 (CPEP…RHAT). The span at 435–473 (PEPEEADDEDEDEELDESDAIGDDDDDIDGEGGEREEET) shows a compositional bias: acidic residues.

Belongs to the cyclin family.

Its function is as follows. Negative regulator, together with pgov, of the transcriptional activator nuc-1, which controls the expression of phosphorous acquisition enzymes. The chain is Nuc-1 negative regulatory protein preg (preg) from Neurospora crassa (strain ATCC 24698 / 74-OR23-1A / CBS 708.71 / DSM 1257 / FGSC 987).